The following is a 479-amino-acid chain: Glutathione gamma-glutamylcysteinyltransferase 3 (479 aa).

Positions 1–221 (MASAGLYRRV…GYMIISKLKR (221 aa)) constitute a Peptidase C83 domain. Catalysis depends on residues Cys-56, His-162, and Asp-180.

Belongs to the phytochelatin synthase family. In terms of tissue distribution, expressed in roots, nodules and leaves.

It catalyses the reaction [Glu(-Cys)](n)-Gly + glutathione + H(+) = [Glu(-Cys)](n+1)-Gly + glycine. Requires cadmium for activity. Involved in the synthesis of phytochelatins (PC) and homophytochelatins (hPC), the heavy-metal-binding peptides of plants. The chain is Glutathione gamma-glutamylcysteinyltransferase 3 (PCS3) from Lotus japonicus (Lotus corniculatus var. japonicus).